Here is a 121-residue protein sequence, read N- to C-terminus: MARIAGIDIPREKRVVISLTYIYGVGKSTAAKILEEANVSPDTRVKDLTDDELGRIRETVDAYKVEGDLRREQNLNIKRLMEISSYRGIRHRRGLPVRGQKTKNNARTRKGPVKTVANKKK.

The tract at residues 91-121 (HRRGLPVRGQKTKNNARTRKGPVKTVANKKK) is disordered.

It belongs to the universal ribosomal protein uS13 family. In terms of assembly, part of the 30S ribosomal subunit. Forms a loose heterodimer with protein S19. Forms two bridges to the 50S subunit in the 70S ribosome.

Its function is as follows. Located at the top of the head of the 30S subunit, it contacts several helices of the 16S rRNA. In the 70S ribosome it contacts the 23S rRNA (bridge B1a) and protein L5 of the 50S subunit (bridge B1b), connecting the 2 subunits; these bridges are implicated in subunit movement. Contacts the tRNAs in the A and P-sites. The sequence is that of Small ribosomal subunit protein uS13 from Staphylococcus carnosus (strain TM300).